The chain runs to 1203 residues: DNA-directed RNA polymerase subunit beta' (1203 aa).

Zn(2+)-binding residues include Cys-60, Cys-62, Cys-75, and Cys-78. Positions 449, 451, and 453 each coordinate Mg(2+). The Zn(2+) site is built by Cys-818, Cys-892, Cys-899, and Cys-902.

The protein belongs to the RNA polymerase beta' chain family. As to quaternary structure, the RNAP catalytic core consists of 2 alpha, 1 beta, 1 beta' and 1 omega subunit. When a sigma factor is associated with the core the holoenzyme is formed, which can initiate transcription. Mg(2+) serves as cofactor. It depends on Zn(2+) as a cofactor.

The catalysed reaction is RNA(n) + a ribonucleoside 5'-triphosphate = RNA(n+1) + diphosphate. Its function is as follows. DNA-dependent RNA polymerase catalyzes the transcription of DNA into RNA using the four ribonucleoside triphosphates as substrates. The sequence is that of DNA-directed RNA polymerase subunit beta' from Bacillus cereus (strain ATCC 10987 / NRS 248).